Consider the following 201-residue polypeptide: LexA repressor (201 aa).

The segment at residues 28–48 is a DNA-binding region (H-T-H motif); the sequence is LREIAAKLGISGTLGVMKHLE. Catalysis depends on for autocatalytic cleavage activity residues S120 and K157.

This sequence belongs to the peptidase S24 family. Homodimer.

It catalyses the reaction Hydrolysis of Ala-|-Gly bond in repressor LexA.. Represses a number of genes involved in the response to DNA damage (SOS response), including recA and lexA. In the presence of single-stranded DNA, RecA interacts with LexA causing an autocatalytic cleavage which disrupts the DNA-binding part of LexA, leading to derepression of the SOS regulon and eventually DNA repair. The polypeptide is LexA repressor (Geobacter sp. (strain M21)).